A 7524-amino-acid chain; its full sequence is Mucin-19 (7524 aa).

A signal peptide spans 1 to 20 (MKLILLYLAVVLCFVGKGAA). The tract at residues 20-47 (ARSPTTTRTPTPSTSEKASHVPEATPTY) is disordered. Residues 21 to 34 (RSPTTTRTPTPSTS) are compositionally biased toward low complexity. The VWFD 1 domain occupies 55–225 (GEATMWGKDK…VCEDGVQYCD (171 aa)). An intrachain disulfide couples C79 to C224. Residues 298 to 353 (CPGKHIYKECGPSNPPTCSNVAPFQDSECVSGCTCPEGYLLDDIGEKGKCVLKEKC) enclose the TIL domain. VWFD domains lie at 392–568 (GICK…EGSP) and 851–1025 (STCH…QECS). Cystine bridges form between C394–C529, C434–C442, C853–C989, C875–C1024, C884–C986, and C900–C907. The segment covering 1244-1261 (AAATRASSSTSGSVETSV) has biased composition (low complexity). 2 disordered regions span residues 1244–7217 (AAAT…SSLA) and 7249–7297 (SVIK…CPDS). The segment covering 1262 to 1289 (PATTSTSKAQAHITTASSTETSALNSTA) has biased composition (polar residues). 2 stretches are compositionally biased toward low complexity: residues 1320-7099 (PAVS…AGSG) and 7112-7217 (STSG…SSLA). Repeat copies occupy residues 1321-1483 (AVST…TTGP), 1484-1646 (AVST…TTGP), 1647-1809 (AVST…TTGP), 1810-1972 (AVST…TTGP), 1973-2135 (AVST…TTGP), 2136-2298 (AVST…TTGP), 2299-2461 (AVST…TTGP), 2462-2624 (AVST…TTGP), 2625-2787 (AVST…TTGP), 2788-2950 (AVST…TTGP), 2951-3113 (AVST…TTGP), 3114-3276 (AVST…TTGP), 3277-3439 (AVST…TTGP), 3440-3602 (AVST…TTGP), 3603-3765 (AVST…TTGP), 3766-3928 (AVST…TTGP), 3929-4091 (AVST…TTGP), 4092-4254 (AVST…TTGP), 4255-4417 (AVST…TTGP), 4418-4580 (AVST…TTGP), 4581-4743 (AVST…TTGP), 4744-4906 (AVST…TTGP), 4907-5069 (AVST…TTGP), 5070-5232 (AVST…TTGP), 5233-5395 (AVST…TTGP), 5396-5558 (AVST…TTGP), 5559-5721 (AVST…TTGP), 5722-5884 (AVST…TTGP), 5885-6047 (AVST…TTGP), 6048-6210 (AVST…TTGP), 6211-6373 (AVST…TTGP), 6374-6536 (AVST…TTGP), 6537-6699 (AVST…TTGP), 6700-6862 (AVST…TTGP), 6863-7025 (AVST…TTGP), and 7026-7188 (AVST…TTGP). Positions 1321-7188 (AVSTTSAGST…AETAGSTTGP (5868 aa)) are approximate repeats. The span at 7261–7291 (AKSNETTGRTTSMPASTSVAPGVTTSPNISQ) shows a compositional bias: polar residues. VWFC domains follow at residues 7302–7368 (PVCH…GHCE) and 7370–7432 (RTCL…YKCK). 4 disulfides stabilise this stretch: C7435–C7482, C7449–C7496, C7458–C7512, and C7462–C7514. The CTCK domain occupies 7435 to 7519 (CRTTPVNVTV…TTCSCRDQCE (85 aa)).

In terms of tissue distribution, specifically expressed in sublingual salivary glands. Expressed by mucous cells of the submandibular gland and submucosal gland of the trachea. Expression is altered in sld (sublingual gland differentiation arrest) mutants.

It is found in the secreted. In terms of biological role, may function in ocular mucus homeostasis. This is Mucin-19 (Muc19) from Mus musculus (Mouse).